The following is a 157-amino-acid chain: Crossover junction endodeoxyribonuclease RuvC (157 aa).

Catalysis depends on residues aspartate 7, glutamate 66, and aspartate 139. Positions 7, 66, and 139 each coordinate Mg(2+).

The protein belongs to the RuvC family. In terms of assembly, homodimer which binds Holliday junction (HJ) DNA. The HJ becomes 2-fold symmetrical on binding to RuvC with unstacked arms; it has a different conformation from HJ DNA in complex with RuvA. In the full resolvosome a probable DNA-RuvA(4)-RuvB(12)-RuvC(2) complex forms which resolves the HJ. Mg(2+) is required as a cofactor.

It is found in the cytoplasm. It catalyses the reaction Endonucleolytic cleavage at a junction such as a reciprocal single-stranded crossover between two homologous DNA duplexes (Holliday junction).. Functionally, the RuvA-RuvB-RuvC complex processes Holliday junction (HJ) DNA during genetic recombination and DNA repair. Endonuclease that resolves HJ intermediates. Cleaves cruciform DNA by making single-stranded nicks across the HJ at symmetrical positions within the homologous arms, yielding a 5'-phosphate and a 3'-hydroxyl group; requires a central core of homology in the junction. The consensus cleavage sequence is 5'-(A/T)TT(C/G)-3'. Cleavage occurs on the 3'-side of the TT dinucleotide at the point of strand exchange. HJ branch migration catalyzed by RuvA-RuvB allows RuvC to scan DNA until it finds its consensus sequence, where it cleaves and resolves the cruciform DNA. The sequence is that of Crossover junction endodeoxyribonuclease RuvC from Helicobacter pylori (strain J99 / ATCC 700824) (Campylobacter pylori J99).